The sequence spans 56 residues: Large ribosomal subunit protein bL32 (56 aa).

The interval 1–26 is disordered; it reads MAVQQNKKSRSKRGMRRSHDALSTAQ. The segment covering 7–16 has biased composition (basic residues); the sequence is KKSRSKRGMR.

It belongs to the bacterial ribosomal protein bL32 family.

The sequence is that of Large ribosomal subunit protein bL32 from Shewanella amazonensis (strain ATCC BAA-1098 / SB2B).